The primary structure comprises 492 residues: Protein nucleotidyltransferase YdiU (492 aa).

The ATP site is built by Gly-95, Gly-97, Arg-98, Lys-118, Asp-130, Gly-131, Arg-181, and Arg-188. The Proton acceptor role is filled by Asp-257. The Mg(2+) site is built by Asn-258 and Asp-267. Position 267 (Asp-267) interacts with ATP. The span at 466–475 shows a compositional bias: basic and acidic residues; it reads YDDQPEHAEY. A disordered region spans residues 466 to 492; the sequence is YDDQPEHAEYRQPPPPSEKPYQTFCGT.

The protein belongs to the SELO family. Requires Mg(2+) as cofactor. It depends on Mn(2+) as a cofactor.

It carries out the reaction L-seryl-[protein] + ATP = 3-O-(5'-adenylyl)-L-seryl-[protein] + diphosphate. The catalysed reaction is L-threonyl-[protein] + ATP = 3-O-(5'-adenylyl)-L-threonyl-[protein] + diphosphate. The enzyme catalyses L-tyrosyl-[protein] + ATP = O-(5'-adenylyl)-L-tyrosyl-[protein] + diphosphate. It catalyses the reaction L-histidyl-[protein] + UTP = N(tele)-(5'-uridylyl)-L-histidyl-[protein] + diphosphate. It carries out the reaction L-seryl-[protein] + UTP = O-(5'-uridylyl)-L-seryl-[protein] + diphosphate. The catalysed reaction is L-tyrosyl-[protein] + UTP = O-(5'-uridylyl)-L-tyrosyl-[protein] + diphosphate. Functionally, nucleotidyltransferase involved in the post-translational modification of proteins. It can catalyze the addition of adenosine monophosphate (AMP) or uridine monophosphate (UMP) to a protein, resulting in modifications known as AMPylation and UMPylation. The chain is Protein nucleotidyltransferase YdiU from Syntrophotalea carbinolica (strain DSM 2380 / NBRC 103641 / GraBd1) (Pelobacter carbinolicus).